The following is a 309-amino-acid chain: Porphobilinogen deaminase (309 aa).

At Cys242 the chain carries S-(dipyrrolylmethanemethyl)cysteine.

This sequence belongs to the HMBS family. As to quaternary structure, monomer. Dipyrromethane serves as cofactor.

The enzyme catalyses 4 porphobilinogen + H2O = hydroxymethylbilane + 4 NH4(+). It functions in the pathway porphyrin-containing compound metabolism; protoporphyrin-IX biosynthesis; coproporphyrinogen-III from 5-aminolevulinate: step 2/4. In terms of biological role, tetrapolymerization of the monopyrrole PBG into the hydroxymethylbilane pre-uroporphyrinogen in several discrete steps. This chain is Porphobilinogen deaminase, found in Shewanella frigidimarina (strain NCIMB 400).